The sequence spans 265 residues: 3-methyl-2-oxobutanoate hydroxymethyltransferase (265 aa).

Residues Asp-45 and Asp-84 each coordinate Mg(2+). 3-methyl-2-oxobutanoate contacts are provided by residues 45–46 (DS), Asp-84, and Lys-112. Glu-114 is a binding site for Mg(2+). The active-site Proton acceptor is the Glu-181.

It belongs to the PanB family. As to quaternary structure, homodecamer; pentamer of dimers. Mg(2+) is required as a cofactor.

Its subcellular location is the cytoplasm. The catalysed reaction is 3-methyl-2-oxobutanoate + (6R)-5,10-methylene-5,6,7,8-tetrahydrofolate + H2O = 2-dehydropantoate + (6S)-5,6,7,8-tetrahydrofolate. It participates in cofactor biosynthesis; (R)-pantothenate biosynthesis; (R)-pantoate from 3-methyl-2-oxobutanoate: step 1/2. In terms of biological role, catalyzes the reversible reaction in which hydroxymethyl group from 5,10-methylenetetrahydrofolate is transferred onto alpha-ketoisovalerate to form ketopantoate. This Wigglesworthia glossinidia brevipalpis protein is 3-methyl-2-oxobutanoate hydroxymethyltransferase.